Reading from the N-terminus, the 338-residue chain is Fructose-1,6-bisphosphatase 1 (338 aa).

An N-acetylalanine modification is found at A2. Residues 18–22 (VMEEG) and 28–32 (TGELT) contribute to the AMP site. Positions 69 and 98 each coordinate Mg(2+). 113-114 (KY) serves as a coordination point for AMP. Mg(2+) contacts are provided by D119, L121, and D122. 122-125 (DGSS) contacts substrate. AMP is bound at residue R141. At K151 the chain carries N6-succinyllysine. Substrate-binding positions include 213-216 (NEGY), 244-249 (RYVGSM), Y265, and 275-277 (KLR). A phosphotyrosine mark is found at Y216, Y245, and Y265. Mg(2+) is bound at residue E281.

This sequence belongs to the FBPase class 1 family. As to quaternary structure, homotetramer. The cofactor is Mg(2+). As to expression, expressed in pancreatic islets.

The enzyme catalyses beta-D-fructose 1,6-bisphosphate + H2O = beta-D-fructose 6-phosphate + phosphate. It functions in the pathway carbohydrate biosynthesis; gluconeogenesis. With respect to regulation, subject to complex allosteric regulation. The enzyme can assume an active R-state, or an inactive T-state. Intermediate conformations may exist. AMP acts as an allosteric inhibitor. AMP binding affects the turnover of bound substrate and not the affinity for substrate. Fructose 2,6-bisphosphate acts as a competitive inhibitor. Fructose 2,6-bisphosphate and AMP have synergistic effects. Catalyzes the hydrolysis of fructose 1,6-bisphosphate to fructose 6-phosphate in the presence of divalent cations, acting as a rate-limiting enzyme in gluconeogenesis. Plays a role in regulating glucose sensing and insulin secretion of pancreatic beta-cells. Appears to modulate glycerol gluconeogenesis in liver. Important regulator of appetite and adiposity; increased expression of the protein in liver after nutrient excess increases circulating satiety hormones and reduces appetite-stimulating neuropeptides and thus seems to provide a feedback mechanism to limit weight gain. The chain is Fructose-1,6-bisphosphatase 1 (FBP1) from Homo sapiens (Human).